Consider the following 517-residue polypeptide: T-box transcription factor TBX22 (517 aa).

Residues Met1–Leu83 form a disordered region. Residues Leu35–Glu45 show a composition bias toward acidic residues. Positions Glu46–Ser66 are enriched in basic and acidic residues. A compositionally biased stretch (low complexity) spans Ser74 to Leu83. The segment at residues Leu93–Asp280 is a DNA-binding region (T-box). Residues Thr312–Asn333 are disordered. Over residues Ser314 to Asn333 the composition is skewed to low complexity.

It localises to the nucleus. Probable transcriptional regulator involved in developmental processes. This is major determinant crucial to palatogenesis. In Mus musculus (Mouse), this protein is T-box transcription factor TBX22 (Tbx22).